Consider the following 278-residue polypeptide: MEKEVWRFIDSGNCSPAFNMALDEALLEWHSEGKIPPTIRFYGWNPPTLSIGYFQKVEKEIDMEAVKKYGLGFVRRPTGGRGVLHDQELTYSVIVSELHPAMPQTVTEAYRVISQGILEGFRFLGLDAYFAVPKTEEEKADLKNPRSAVCFDAPSWYELVVEGRKVAGSAQTRQKGVILQHGSILLHLDEDMLFSLFKYPNERVKERLRQNFKNKAVAINELTDRNITINEAKEAFFRGFEKGLNVQLERYELTDDELFYVQQLAKNKYETDEWNFKR.

Positions 33–248 (GKIPPTIRFY…GFEKGLNVQL (216 aa)) constitute a BPL/LPL catalytic domain. Residue Cys-150 is the Acyl-thioester intermediate of the active site.

This sequence belongs to the octanoyltransferase LipM family. In terms of assembly, monomer.

The enzyme catalyses octanoyl-[ACP] + L-lysyl-[protein] = N(6)-octanoyl-L-lysyl-[protein] + holo-[ACP] + H(+). It functions in the pathway protein modification; protein lipoylation via endogenous pathway; protein N(6)-(lipoyl)lysine from octanoyl-[acyl-carrier-protein]. In terms of biological role, catalyzes the transfer of endogenously produced octanoic acid from octanoyl-acyl-carrier-protein onto the lipoyl domain of GcvH, an intermediate carrier during protein lipoylation. The protein is Octanoyltransferase LipM of Anoxybacillus flavithermus (strain DSM 21510 / WK1).